The following is a 576-amino-acid chain: Immunoglobulin mu heavy chain (576 aa).

Q1 bears the Pyrrolidone carboxylic acid mark. Ig-like domains are found at residues Q1–C97, P132–C212, P236–S334, P352–S442, and P452–D553. Residues Q1–V124 are variable (V) domain, involved in antigen recognition. 3 cysteine pairs are disulfide-bonded: C22–C97, C153–C212, and C259–C320. N-linked (GlcNAc...) asparagine glycans are attached at residues N74 and N170. The constant (C) domain stretch occupies residues S125–Y576. N-linked (GlcNAc...) asparagine glycosylation is found at N332, N395, and N402. Intrachain disulfides connect C367/C426 and C474/C536. N563 is a glycosylation site (N-linked (GlcNAc...) asparagine).

Immunoglobulins are composed of two identical heavy chains and two identical light chains; disulfide-linked. It is found almost exclusively as a homopentamer in the serum. Membrane-bound IgM molecules are non-covalently associated with heterodimer of CD79A and CD79B.

The protein resides in the secreted. It localises to the cell membrane. Functionally, immunoglobulins, also known as antibodies, are membrane-bound or secreted glycoproteins produced by B lymphocytes. In the recognition phase of humoral immunity, the membrane-bound immunoglobulins serve as receptors which, upon binding of a specific antigen, trigger the clonal expansion and differentiation of B lymphocytes into immunoglobulins-secreting plasma cells. Secreted immunoglobulins mediate the effector phase of humoral immunity, which results in the elimination of bound antigens. The antigen binding site is formed by the variable domain of one heavy chain, together with that of its associated light chain. Thus, each immunoglobulin has two antigen binding sites with remarkable affinity for a particular antigen. The variable domains are assembled by a process called V-(D)-J rearrangement and can then be subjected to somatic hypermutations which, after exposure to antigen and selection, allow affinity maturation for a particular antigen. IgM antibodies play an important role in primary defense mechanisms. They have been shown to be involved in early recognition of external invaders like bacteria and viruses, cellular waste and modified self, as well as in recognition and elimination of precancerous and cancerous lesions. The membrane-bound form is found in the majority of normal B cells alongside with IgD. Membrane-bound IgM induces the phosphorylation of CD79A and CD79B by the Src family of protein tyrosine kinases. It may cause death of cells by apoptosis. It is also found in soluble form, which represents about 30% of the total serum immunoglobulins where it is found almost exclusively as a homopentamer. After the antigen binds to the B cell receptor, the secreted form is secreted in large amounts (, PubMed:16895553). This chain is Immunoglobulin mu heavy chain, found in Homo sapiens (Human).